Here is an 89-residue protein sequence, read N- to C-terminus: NADH-ubiquinone oxidoreductase chain 4L (89 aa).

The next 3 helical transmembrane spans lie at 1–21, 22–42, and 55–75; these read MNLS…NRKN, IILM…LILI, and FAIY…GILV.

The protein belongs to the complex I subunit 4L family.

The protein localises to the mitochondrion membrane. The enzyme catalyses a ubiquinone + NADH + 5 H(+)(in) = a ubiquinol + NAD(+) + 4 H(+)(out). In terms of biological role, core subunit of the mitochondrial membrane respiratory chain NADH dehydrogenase (Complex I) that is believed to belong to the minimal assembly required for catalysis. Complex I functions in the transfer of electrons from NADH to the respiratory chain. The immediate electron acceptor for the enzyme is believed to be ubiquinone. In Trichophyton rubrum (Athlete's foot fungus), this protein is NADH-ubiquinone oxidoreductase chain 4L (ND4L).